A 180-amino-acid polypeptide reads, in one-letter code: ATP synthase subunit delta (180 aa).

It belongs to the ATPase delta chain family. In terms of assembly, F-type ATPases have 2 components, F(1) - the catalytic core - and F(0) - the membrane proton channel. F(1) has five subunits: alpha(3), beta(3), gamma(1), delta(1), epsilon(1). F(0) has three main subunits: a(1), b(2) and c(10-14). The alpha and beta chains form an alternating ring which encloses part of the gamma chain. F(1) is attached to F(0) by a central stalk formed by the gamma and epsilon chains, while a peripheral stalk is formed by the delta and b chains.

Its subcellular location is the cell inner membrane. Its function is as follows. F(1)F(0) ATP synthase produces ATP from ADP in the presence of a proton or sodium gradient. F-type ATPases consist of two structural domains, F(1) containing the extramembraneous catalytic core and F(0) containing the membrane proton channel, linked together by a central stalk and a peripheral stalk. During catalysis, ATP synthesis in the catalytic domain of F(1) is coupled via a rotary mechanism of the central stalk subunits to proton translocation. Functionally, this protein is part of the stalk that links CF(0) to CF(1). It either transmits conformational changes from CF(0) to CF(1) or is implicated in proton conduction. The protein is ATP synthase subunit delta of Cupriavidus necator (strain ATCC 17699 / DSM 428 / KCTC 22496 / NCIMB 10442 / H16 / Stanier 337) (Ralstonia eutropha).